The chain runs to 184 residues: Mediator of RNA polymerase II transcription subunit 11 (184 aa).

Polar residues predominate over residues 142–152 (ATTKQETNINN). A disordered region spans residues 142–184 (ATTKQETNINNEDSEKEKQENITAIETKKESSENEDEDFDMIA). Residues 154–173 (DSEKEKQENITAIETKKESS) show a composition bias toward basic and acidic residues. The span at 174–184 (ENEDEDFDMIA) shows a compositional bias: acidic residues.

This sequence belongs to the Mediator complex subunit 11 family. Component of the Mediator complex.

It is found in the nucleus. Functionally, component of the Mediator complex, a coactivator involved in the regulated transcription of nearly all RNA polymerase II-dependent genes. Mediator functions as a bridge to convey information from gene-specific regulatory proteins to the basal RNA polymerase II transcription machinery. Mediator is recruited to promoters by direct interactions with regulatory proteins and serves as a scaffold for the assembly of a functional pre-initiation complex with RNA polymerase II and the general transcription factors. In Debaryomyces hansenii (strain ATCC 36239 / CBS 767 / BCRC 21394 / JCM 1990 / NBRC 0083 / IGC 2968) (Yeast), this protein is Mediator of RNA polymerase II transcription subunit 11 (MED11).